Here is a 188-residue protein sequence, read N- to C-terminus: Protein YecM (188 aa).

It to H.influenzae HI_1582/HI_1581.

The protein is Protein YecM (yecM) of Escherichia coli (strain K12).